The sequence spans 366 residues: Geranylgeranyl pyrophosphate synthase, chloroplastic/chromoplastic (366 aa).

The segment at 44-65 is disordered; sequence KRTVSSSSSSSLITKEDNNLKS. 3 residues coordinate isopentenyl diphosphate: Lys112, Arg115, and His144. Mg(2+) contacts are provided by Asp151 and Asp157. Arg162 is a dimethylallyl diphosphate binding site. An isopentenyl diphosphate-binding site is contributed by Arg163. Dimethylallyl diphosphate contacts are provided by Lys251, Thr252, Gln289, Lys306, and Lys316.

It belongs to the FPP/GGPP synthase family. Dimer. Mg(2+) is required as a cofactor.

The protein localises to the plastid. It is found in the chloroplast stroma. It localises to the chromoplast. The enzyme catalyses isopentenyl diphosphate + dimethylallyl diphosphate = (2E)-geranyl diphosphate + diphosphate. The catalysed reaction is isopentenyl diphosphate + (2E)-geranyl diphosphate = (2E,6E)-farnesyl diphosphate + diphosphate. It catalyses the reaction isopentenyl diphosphate + (2E,6E)-farnesyl diphosphate = (2E,6E,10E)-geranylgeranyl diphosphate + diphosphate. Its pathway is isoprenoid biosynthesis; farnesyl diphosphate biosynthesis; farnesyl diphosphate from geranyl diphosphate and isopentenyl diphosphate: step 1/1. It participates in isoprenoid biosynthesis; geranyl diphosphate biosynthesis; geranyl diphosphate from dimethylallyl diphosphate and isopentenyl diphosphate: step 1/1. The protein operates within isoprenoid biosynthesis; geranylgeranyl diphosphate biosynthesis; geranylgeranyl diphosphate from farnesyl diphosphate and isopentenyl diphosphate: step 1/1. In terms of biological role, catalyzes the trans-addition of the three molecules of IPP onto DMAPP to form geranylgeranyl pyrophosphate. The chain is Geranylgeranyl pyrophosphate synthase, chloroplastic/chromoplastic (GGPS1) from Sinapis alba (White mustard).